Reading from the N-terminus, the 356-residue chain is uncharacterized protein (356 aa).

This is an uncharacterized protein from Acanthamoeba polyphaga (Amoeba).